Consider the following 269-residue polypeptide: uncharacterized protein (269 aa).

4 consecutive transmembrane segments (helical) span residues 64–84 (FVYF…LAGV), 125–145 (YGIA…FLSF), 169–189 (FFIS…FLVL), and 230–250 (VFAT…IAIF).

The protein localises to the cell membrane. This is an uncharacterized protein from Mycoplasma genitalium (strain ATCC 33530 / DSM 19775 / NCTC 10195 / G37) (Mycoplasmoides genitalium).